Reading from the N-terminus, the 83-residue chain is Putative beta-neurotoxin RjAa17f (83 aa).

An N-terminal signal peptide occupies residues 1–18; the sequence is MKILIFIIASFMLIGVEC. An LCN-type CS-alpha/beta domain is found at 19-82; sequence KEGYPMGRNG…VWDFSNIKCR (64 aa). 4 disulfide bridges follow: Cys-29–Cys-81, Cys-33–Cys-55, Cys-40–Cys-62, and Cys-44–Cys-64.

Belongs to the long (4 C-C) scorpion toxin superfamily. Sodium channel inhibitor family. Beta subfamily. Expressed by the venom gland.

The protein localises to the secreted. Its function is as follows. Beta toxins bind voltage-independently at site-4 of sodium channels (Nav) and shift the voltage of activation toward more negative potentials thereby affecting sodium channel activation and promoting spontaneous and repetitive firing. This is Putative beta-neurotoxin RjAa17f from Rhopalurus junceus (Caribbean blue scorpion).